The chain runs to 406 residues: Tubby-like F-box protein 11 (406 aa).

Positions serine 53–glycine 108 constitute an F-box domain.

This sequence belongs to the TUB family. As to expression, ubiquitous.

In Oryza sativa subsp. japonica (Rice), this protein is Tubby-like F-box protein 11 (TULP11).